The following is a 97-amino-acid chain: uncharacterized protein (97 aa).

Helical transmembrane passes span 7–27, 34–54, and 69–89; these read CIAPLIYLVFGVSSTWLIGLG, IPMLIISLCAFAYGFWLLMFS, and IVLYWIVFIVMIFFLTYPTIL.

It is found in the cell membrane. This is an uncharacterized protein from Haemophilus influenzae (strain ATCC 51907 / DSM 11121 / KW20 / Rd).